The sequence spans 160 residues: Ribosomal RNA large subunit methyltransferase H (160 aa).

The S-adenosyl-L-methionine site is built by leucine 77 and glycine 109.

Belongs to the RNA methyltransferase RlmH family. Homodimer.

The protein localises to the cytoplasm. The enzyme catalyses pseudouridine(1915) in 23S rRNA + S-adenosyl-L-methionine = N(3)-methylpseudouridine(1915) in 23S rRNA + S-adenosyl-L-homocysteine + H(+). Specifically methylates the pseudouridine at position 1915 (m3Psi1915) in 23S rRNA. The sequence is that of Ribosomal RNA large subunit methyltransferase H from Moorella thermoacetica (strain ATCC 39073 / JCM 9320).